Here is a 432-residue protein sequence, read N- to C-terminus: Gamma-glutamyl phosphate reductase (432 aa).

The protein belongs to the gamma-glutamyl phosphate reductase family.

It localises to the cytoplasm. It catalyses the reaction L-glutamate 5-semialdehyde + phosphate + NADP(+) = L-glutamyl 5-phosphate + NADPH + H(+). It functions in the pathway amino-acid biosynthesis; L-proline biosynthesis; L-glutamate 5-semialdehyde from L-glutamate: step 2/2. Its function is as follows. Catalyzes the NADPH-dependent reduction of L-glutamate 5-phosphate into L-glutamate 5-semialdehyde and phosphate. The product spontaneously undergoes cyclization to form 1-pyrroline-5-carboxylate. The polypeptide is Gamma-glutamyl phosphate reductase (Methylorubrum extorquens (strain CM4 / NCIMB 13688) (Methylobacterium extorquens)).